The sequence spans 328 residues: D-cysteine desulfhydrase (328 aa).

Lysine 51 is subject to N6-(pyridoxal phosphate)lysine.

It belongs to the ACC deaminase/D-cysteine desulfhydrase family. As to quaternary structure, homodimer. Pyridoxal 5'-phosphate serves as cofactor.

The catalysed reaction is D-cysteine + H2O = hydrogen sulfide + pyruvate + NH4(+) + H(+). Catalyzes the alpha,beta-elimination reaction of D-cysteine and of several D-cysteine derivatives. It could be a defense mechanism against D-cysteine. The sequence is that of D-cysteine desulfhydrase from Salmonella schwarzengrund (strain CVM19633).